A 338-amino-acid chain; its full sequence is Glyceraldehyde-3-phosphate dehydrogenase 2 (338 aa).

Residues 11-12 (RI), aspartate 33, and arginine 78 each bind NAD(+). Residues 149-151 (SCT), threonine 180, 209-210 (TG), and arginine 232 contribute to the D-glyceraldehyde 3-phosphate site. The Nucleophile role is filled by cysteine 150. Asparagine 314 is an NAD(+) binding site.

Belongs to the glyceraldehyde-3-phosphate dehydrogenase family. In terms of assembly, homotetramer.

It is found in the cytoplasm. It carries out the reaction D-glyceraldehyde 3-phosphate + phosphate + NAD(+) = (2R)-3-phospho-glyceroyl phosphate + NADH + H(+). Its pathway is carbohydrate degradation; glycolysis; pyruvate from D-glyceraldehyde 3-phosphate: step 1/5. This is Glyceraldehyde-3-phosphate dehydrogenase 2 (gpd2) from Agaricus bisporus (White button mushroom).